Here is a 413-residue protein sequence, read N- to C-terminus: MQSLEVVEICAGAGGQALGLEKAGFSHRLAVELDVNAAATLRKNLKSDVVITGDVADPSVLNPMEHLGVSLLAGGVPCPPFSIAGKQLGADDMRDLFAWAVELCDVMKPRALMLENVRGLSMPRFAGYRQHVLDRLNDMGYVAEWRLLHASDFGVPQLRPRFVLVALQNKFAPYFTWPEPTGAAPTVGETLKDLMAADGWEGAEEWAAQANDIAPTIVGGSKKHGGADLGPTRAKRAWAELGVDAMGVADAPPQPGDKFKVGPKLTCEMVARIQGWRDGEWIFEGRKTSRYRQIGNAFPPPVAEAIGKRIRAALNMEGEGRDRAVDSDHNPLYRALKESGDFMTHRQLERAVGRPIEAYELERTISDLGRDFEVETKDGASAMAYKLGPFKAFTGQEGHLRHEMFVRHRTKIS.

Positions 4–317 (LEVVEICAGA…KRIRAALNME (314 aa)) constitute an SAM-dependent MTase C5-type domain. Cys78 is an active-site residue.

It belongs to the class I-like SAM-binding methyltransferase superfamily. C5-methyltransferase family.

It catalyses the reaction a 2'-deoxycytidine in DNA + S-adenosyl-L-methionine = a 5-methyl-2'-deoxycytidine in DNA + S-adenosyl-L-homocysteine + H(+). Its function is as follows. A methylase that recognizes the double-stranded sequence 5'-GCCGGC-3', methylates C-? on both strands, and protects the DNA from cleavage by the NaeI endonuclease. The sequence is that of Type II methyltransferase M.NaeI from Lentzea aerocolonigenes (Lechevalieria aerocolonigenes).